The following is a 130-amino-acid chain: Histone H2A type 1 (130 aa).

The interval 1 to 22 (MSGRGKQGGKARAKAKSRSSRA) is disordered. Residue serine 2 is modified to N-acetylserine. The residue at position 2 (serine 2) is a Phosphoserine; by RPS6KA5. Arginine 4 carries the post-translational modification Citrulline; alternate. The residue at position 4 (arginine 4) is a Symmetric dimethylarginine; by PRMT5; alternate. The residue at position 6 (lysine 6) is an N6-(2-hydroxyisobutyryl)lysine. Basic residues predominate over residues 7–19 (QGGKARAKAKSRS). The residue at position 10 (lysine 10) is an N6-(2-hydroxyisobutyryl)lysine; alternate. An N6-lactoyllysine; alternate modification is found at lysine 10. Lysine 10 carries the post-translational modification N6-succinyllysine; alternate. Glycyl lysine isopeptide (Lys-Gly) (interchain with G-Cter in ubiquitin) cross-links involve residues lysine 14 and lysine 16. Lysine 37 carries the N6-(2-hydroxyisobutyryl)lysine; alternate modification. The residue at position 37 (lysine 37) is an N6-(beta-hydroxybutyryl)lysine; alternate. An N6-crotonyllysine; alternate modification is found at lysine 37. An N6-(2-hydroxyisobutyryl)lysine mark is found at lysine 75 and lysine 76. Residue lysine 96 is modified to N6-(2-hydroxyisobutyryl)lysine; alternate. Position 96 is an N6-succinyllysine; alternate (lysine 96). An N6-glutaryllysine; alternate modification is found at lysine 96. At lysine 100 the chain carries N6-glutaryllysine. Position 105 is an N5-methylglutamine (glutamine 105). Residue lysine 119 is modified to N6-(2-hydroxyisobutyryl)lysine; alternate. 2 positions are modified to N6-crotonyllysine; alternate: lysine 119 and lysine 120. Lysine 119 and lysine 120 each carry N6-glutaryllysine; alternate. A Glycyl lysine isopeptide (Lys-Gly) (interchain with G-Cter in ubiquitin); alternate cross-link involves residue lysine 120. At threonine 121 the chain carries Phosphothreonine; by DCAF1. The residue at position 126 (lysine 126) is an N6-crotonyllysine; alternate. At lysine 126 the chain carries N6-glutaryllysine; alternate.

It belongs to the histone H2A family. As to quaternary structure, the nucleosome is a histone octamer containing two molecules each of H2A, H2B, H3 and H4 assembled in one H3-H4 heterotetramer and two H2A-H2B heterodimers. The octamer wraps approximately 147 bp of DNA. Interacts with VRK1; the interaction is mediated by the nucleosome acidic patch, a cluster of negatively charged residues of H2A and H2B forming a cleft within the nucleosome core. Deiminated on Arg-4 in granulocytes upon calcium entry. Post-translationally, monoubiquitination of Lys-120 (H2AK119Ub) by RING1, TRIM37 and RNF2/RING2 complex gives a specific tag for epigenetic transcriptional repression and participates in X chromosome inactivation of female mammals. It is involved in the initiation of both imprinted and random X inactivation. Ubiquitinated H2A is enriched in inactive X chromosome chromatin. Ubiquitination of H2A functions downstream of methylation of 'Lys-27' of histone H3 (H3K27me). H2AK119Ub by RNF2/RING2 can also be induced by ultraviolet and may be involved in DNA repair. Following DNA double-strand breaks (DSBs), it is ubiquitinated through 'Lys-63' linkage of ubiquitin moieties by the E2 ligase UBE2N and the E3 ligases RNF8 and RNF168, leading to the recruitment of repair proteins to sites of DNA damage. Ubiquitination at Lys-14 and Lys-16 (H2AK13Ub and H2AK15Ub, respectively) in response to DNA damage is initiated by RNF168 that mediates monoubiquitination at these 2 sites, and 'Lys-63'-linked ubiquitin are then conjugated to monoubiquitin; RNF8 is able to extend 'Lys-63'-linked ubiquitin chains in vitro. H2AK119Ub and ionizing radiation-induced 'Lys-63'-linked ubiquitination (H2AK13Ub and H2AK15Ub) are distinct events. In terms of processing, phosphorylation on Ser-2 (H2AS1ph) is enhanced during mitosis. Phosphorylation on Ser-2 by RPS6KA5/MSK1 directly represses transcription. Acetylation of H3 inhibits Ser-2 phosphorylation by RPS6KA5/MSK1. Phosphorylation at Thr-121 (H2AT120ph) by DCAF1 is present in the regulatory region of many tumor suppresor genes and down-regulates their transcription. Symmetric dimethylation on Arg-4 by the PRDM1/PRMT5 complex may play a crucial role in the germ-cell lineage. Post-translationally, glutamine methylation at Gln-105 (H2AQ104me) by FBL is specifically dedicated to polymerase I. It is present at 35S ribosomal DNA locus and impairs binding of the FACT complex. In terms of processing, crotonylation (Kcr) is specifically present in male germ cells and marks testis-specific genes in post-meiotic cells, including X-linked genes that escape sex chromosome inactivation in haploid cells. Crotonylation marks active promoters and enhancers and confers resistance to transcriptional repressors. It is also associated with post-meiotically activated genes on autosomes. Lactylated in macrophages by EP300/P300 by using lactoyl-CoA directly derived from endogenous or exogenous lactate, leading to stimulates gene transcription.

It is found in the nucleus. The protein localises to the chromosome. In terms of biological role, core component of nucleosome. Nucleosomes wrap and compact DNA into chromatin, limiting DNA accessibility to the cellular machineries which require DNA as a template. Histones thereby play a central role in transcription regulation, DNA repair, DNA replication and chromosomal stability. DNA accessibility is regulated via a complex set of post-translational modifications of histones, also called histone code, and nucleosome remodeling. The sequence is that of Histone H2A type 1 from Rattus norvegicus (Rat).